The sequence spans 303 residues: Inner kinetochore subunit mal2 (303 aa).

It belongs to the CENP-O/MCM21 family. As to quaternary structure, component of the heterotetrameric kinetochore subcomplex COMA, which consists of fta2, fta7, mal2 and mis17. The COMA subcomplex is part of a larger constitutive centromere-associated network (CCAN) (also known as central kinetochore Sim4 complex in fission yeast), which is composed of at least cnl2, cnp3, cnp20, fta1, fta2, fta3, fta4, fta6, fta7, mal2, mhf1, mhf2, mis6, mis15, mis17, sim4 and wip1.

It is found in the nucleus. Its subcellular location is the chromosome. It localises to the centromere. The protein localises to the kinetochore. Functionally, component of the kinetochore, a multiprotein complex that assembles on centromeric DNA and attaches chromosomes to spindle microtubules, mediating chromosome segregation and sister chromatid segregation during meiosis and mitosis. Component of the inner kinetochore COMA complex, which connects centromere-associated proteins and the outer kinetochore. COMA interacts with other inner kinetochore proteins to form the inner kinetochore constitutive centromere-associated network (CCAN), which serves as a structural platform for outer kinetochore assembly. This chain is Inner kinetochore subunit mal2 (mal2), found in Schizosaccharomyces pombe (strain 972 / ATCC 24843) (Fission yeast).